Consider the following 526-residue polypeptide: Tyrosine-protein kinase transforming protein Src (526 aa).

Residues 1-57 (MGSSKSKPKDPSQRRRSLEPPDSTHHGGFPASQTPNKTAAPDTHRTPSRSFGTVATE) form a disordered region. Gly2 carries N-myristoyl glycine; by host lipidation. Basic and acidic residues predominate over residues 7–25 (KPKDPSQRRRSLEPPDSTH). In terms of domain architecture, SH3 spans 81-142 (GGVTTFVALY…PSNYVAPSDS (62 aa)). Positions 148–245 (WYFGKITRRE…GLCHRLTNVC (98 aa)) constitute an SH2 domain. The Protein kinase domain maps to 267-517 (LRLEVKLGQG…TFEYLQAQLL (251 aa)). ATP contacts are provided by residues 273–281 (LGQGCFGEV) and Lys295. Asp386 (proton acceptor) is an active-site residue. Tyr416 is modified (phosphotyrosine; by autocatalysis).

The protein belongs to the protein kinase superfamily. Tyr protein kinase family. SRC subfamily. As to quaternary structure, homodimer. In terms of processing, the phosphorylated form is termed pp60v-src.

It carries out the reaction L-tyrosyl-[protein] + ATP = O-phospho-L-tyrosyl-[protein] + ADP + H(+). This phosphoprotein, required for both the initiation and the maintenance of neoplastic transformation, is a protein kinase that catalyzes the phosphorylation of tyrosine residues in vitro. Causes mitotic slippage in addition to cytokinesis failure in the host cell. Phosphorylates and attenuates the activity of host CDK1, possibly causing the mitotic slippage. In Rous sarcoma virus subgroup A (strain Schmidt-Ruppin) (RSV-SR-A), this protein is Tyrosine-protein kinase transforming protein Src (V-SRC).